The chain runs to 142 residues: Conidial pigment biosynthesis dehydratase EthD (142 aa).

An EthD domain is found at 25-121; it reads PGMSEAAYRE…PDHQKFADTS (97 aa).

This sequence belongs to the tpcK family.

Its pathway is pigment biosynthesis. Its function is as follows. Dehydratase; part of the Pks1 gene cluster that mediates the biosynthesis of an anthraquinone derivative pigment that contributes to conidial pigmentation that provides protection from UV radiation, heat and cold stress. The polyketide synthase Pks1 produces 1-acetyl-2,4,6,8-tetrahydroxy-9,10-anthraquinone though condensation of acetyl-CoA with malonyl-CoA. The dehydratase EthD and the laccase Mlac1 further convert the anthraquinone derivative into the final conidial pigment. This Metarhizium robertsii (strain ARSEF 23 / ATCC MYA-3075) (Metarhizium anisopliae (strain ARSEF 23)) protein is Conidial pigment biosynthesis dehydratase EthD.